A 152-amino-acid chain; its full sequence is UPF0225 protein YchJ (152 aa).

This sequence belongs to the UPF0225 family.

This Escherichia coli O139:H28 (strain E24377A / ETEC) protein is UPF0225 protein YchJ.